A 631-amino-acid chain; its full sequence is Transmembrane and coiled-coil domain-containing protein 4 (631 aa).

Residues 1-27 form a disordered region; sequence MATWNRPHPRQPVAPEPAAEDDSQQPL. Residues 156–183 are a coiled coil; sequence FLESLKDAKEEESETAEASRKRKEKRRK. A run of 3 helical transmembrane segments spans residues 200 to 220, 228 to 248, and 343 to 363; these read VIGVTGGLAAPLVAAGAATII, LGSVAGIAVMTSLFGAAGAGL, and LSGIVAALTWPASLLSVANVI. The segment at 555–595 is disordered; the sequence is DGQSQGPASEDSLKTTIPSSASQAQMPAGLNQSTEDSLSTA. Residues 568–594 show a composition bias toward polar residues; the sequence is KTTIPSSASQAQMPAGLNQSTEDSLST.

It belongs to the TMCO4 family.

It is found in the membrane. The protein is Transmembrane and coiled-coil domain-containing protein 4 (Tmco4) of Mus musculus (Mouse).